A 411-amino-acid polypeptide reads, in one-letter code: Serine hydroxymethyltransferase (411 aa).

(6S)-5,6,7,8-tetrahydrofolate-binding positions include Leu113 and 117-119 (GHL). Lys222 is modified (N6-(pyridoxal phosphate)lysine). Residues Glu238 and 346–348 (SPF) each bind (6S)-5,6,7,8-tetrahydrofolate.

The protein belongs to the SHMT family. As to quaternary structure, homodimer. Requires pyridoxal 5'-phosphate as cofactor.

It localises to the cytoplasm. The catalysed reaction is (6R)-5,10-methylene-5,6,7,8-tetrahydrofolate + glycine + H2O = (6S)-5,6,7,8-tetrahydrofolate + L-serine. The protein operates within one-carbon metabolism; tetrahydrofolate interconversion. It participates in amino-acid biosynthesis; glycine biosynthesis; glycine from L-serine: step 1/1. Functionally, catalyzes the reversible interconversion of serine and glycine with tetrahydrofolate (THF) serving as the one-carbon carrier. This reaction serves as the major source of one-carbon groups required for the biosynthesis of purines, thymidylate, methionine, and other important biomolecules. Also exhibits THF-independent aldolase activity toward beta-hydroxyamino acids, producing glycine and aldehydes, via a retro-aldol mechanism. The chain is Serine hydroxymethyltransferase from Prochlorococcus marinus (strain NATL1A).